The primary structure comprises 384 residues: S-adenosylmethionine synthase (384 aa).

His15 serves as a coordination point for ATP. Asp17 is a Mg(2+) binding site. Position 43 (Glu43) interacts with K(+). L-methionine is bound by residues Glu56 and Gln99. Positions 99-109 are flexible loop; the sequence is QSPDINQGVDK. ATP is bound by residues 164–166, 230–231, Asp239, 245–246, Ala262, and Lys266; these read DAK, RF, and RK. Asp239 is an L-methionine binding site. Lys270 contacts L-methionine.

The protein belongs to the AdoMet synthase family. As to quaternary structure, homotetramer; dimer of dimers. Mg(2+) is required as a cofactor. The cofactor is K(+).

It localises to the cytoplasm. It carries out the reaction L-methionine + ATP + H2O = S-adenosyl-L-methionine + phosphate + diphosphate. The protein operates within amino-acid biosynthesis; S-adenosyl-L-methionine biosynthesis; S-adenosyl-L-methionine from L-methionine: step 1/1. Functionally, catalyzes the formation of S-adenosylmethionine (AdoMet) from methionine and ATP. The overall synthetic reaction is composed of two sequential steps, AdoMet formation and the subsequent tripolyphosphate hydrolysis which occurs prior to release of AdoMet from the enzyme. The protein is S-adenosylmethionine synthase of Aliivibrio fischeri (strain ATCC 700601 / ES114) (Vibrio fischeri).